The sequence spans 1060 residues: Protein FAM184B (1060 aa).

Over residues Met-1 to Gly-17 the composition is skewed to polar residues. The segment at Met-1–Ala-24 is disordered. Residues Ala-51–Glu-159 are a coiled coil. Residues Leu-165 to Pro-191 are disordered. 2 coiled-coil regions span residues Glu-192 to Met-333 and Met-402 to Glu-502. 3 disordered regions span residues Gln-532 to Thr-566, Thr-681 to His-700, and Gly-762 to Glu-803. 3 stretches are compositionally biased toward basic and acidic residues: residues Leu-536 to Ala-554, Thr-681 to Ser-690, and Asp-773 to Gly-785. The stretch at Leu-584–Gln-769 forms a coiled coil. Positions Gly-806–His-934 form a coiled coil. Polar residues-rich tracts occupy residues Ser-994–Pro-1009 and Lys-1018–Arg-1030. Positions Ser-994–His-1050 are disordered.

It belongs to the FAM184 family.

This chain is Protein FAM184B (FAM184B), found in Homo sapiens (Human).